The following is a 73-amino-acid chain: Large ribosomal subunit protein bL28 (73 aa).

The protein belongs to the bacterial ribosomal protein bL28 family.

The sequence is that of Large ribosomal subunit protein bL28 from Anaeromyxobacter sp. (strain Fw109-5).